Reading from the N-terminus, the 453-residue chain is Asparagine--tRNA ligase (453 aa).

It belongs to the class-II aminoacyl-tRNA synthetase family. Homodimer.

Its subcellular location is the cytoplasm. The enzyme catalyses tRNA(Asn) + L-asparagine + ATP = L-asparaginyl-tRNA(Asn) + AMP + diphosphate + H(+). This is Asparagine--tRNA ligase from Malacoplasma penetrans (strain HF-2) (Mycoplasma penetrans).